A 63-amino-acid chain; its full sequence is Small ribosomal subunit protein eS17 (63 aa).

Belongs to the eukaryotic ribosomal protein eS17 family.

In Haloarcula marismortui (strain ATCC 43049 / DSM 3752 / JCM 8966 / VKM B-1809) (Halobacterium marismortui), this protein is Small ribosomal subunit protein eS17 (rps17e).